The chain runs to 414 residues: Putative nickel insertion protein (414 aa).

The disordered stretch occupies residues 70–91; sequence ATHHDHDHSQDQTHHHHADHAP.

It belongs to the LarC family.

The chain is Putative nickel insertion protein from Picosynechococcus sp. (strain ATCC 27264 / PCC 7002 / PR-6) (Agmenellum quadruplicatum).